Reading from the N-terminus, the 427-residue chain is MLDIKWIRENPEALDAALAKRGAEPQAQSLVALDEKRRSAVQKAQDMLSRRNLASKEIGAAMAQKNGELAEKLKAEVAELKTLLPAIEEEDRQLTAELNDALSRIPNIPFDDVPVGKDEHDNVVTRTVGEKPRWNHTPKEHFEIGEALGYMDFERAAKLSGSRFTVLTGPLARLERALGQFMIDLHTREHGYTEVSSPLMVRAEALFGTGNLPKFEEDLFKTTDDRYLIPTAEVTLTNLVREEILEQEKLPLRFTALTPSFRSEAGSAGRDTRGMLRQHQFWKCELVSITDADSAIAEHERMTACAEEVLKRLGLHFRTMTLCTGDMGFGSRKTYDLEVWLPGQNAFREISSCSVCGDFQARRMNARYRGKDDKTNRFVHTLNGSGTAVGRCLIAVLENYLNEDGSVTIPDVLLPYMGGLTKIERAA.

An L-serine-binding site is contributed by 231-233 (TAE). ATP is bound at residue 262–264 (RSE). E285 contacts L-serine. 349 to 352 (EISS) contacts ATP. Residue S385 coordinates L-serine.

The protein belongs to the class-II aminoacyl-tRNA synthetase family. Type-1 seryl-tRNA synthetase subfamily. Homodimer. The tRNA molecule binds across the dimer.

The protein resides in the cytoplasm. The catalysed reaction is tRNA(Ser) + L-serine + ATP = L-seryl-tRNA(Ser) + AMP + diphosphate + H(+). It carries out the reaction tRNA(Sec) + L-serine + ATP = L-seryl-tRNA(Sec) + AMP + diphosphate + H(+). The protein operates within aminoacyl-tRNA biosynthesis; selenocysteinyl-tRNA(Sec) biosynthesis; L-seryl-tRNA(Sec) from L-serine and tRNA(Sec): step 1/1. Its function is as follows. Catalyzes the attachment of serine to tRNA(Ser). Is also able to aminoacylate tRNA(Sec) with serine, to form the misacylated tRNA L-seryl-tRNA(Sec), which will be further converted into selenocysteinyl-tRNA(Sec). This is Serine--tRNA ligase from Rhizobium etli (strain CIAT 652).